A 678-amino-acid polypeptide reads, in one-letter code: Auxin response factor 7 (678 aa).

A DNA-binding region (TF-B3) is located at residues 128 to 230 (FCKTLTASDT…ELRVGVRRLM (103 aa)). 2 disordered regions span residues 360 to 386 (AVSN…NSIA) and 502 to 547 (GVGQ…SRQV). Residues 548–641 (RSCTKVIMQG…EAKQLTPKSK (94 aa)) form the PB1 domain. The tract at residues 643–678 (PIIGDAIKPNPNKQSPESDMPHSDLDSTAPVTDKDC) is disordered.

The protein belongs to the ARF family. Homodimers and heterodimers. Expressed in roots, culms, leaves and young panicles.

The protein localises to the nucleus. In terms of biological role, auxin response factors (ARFs) are transcriptional factors that bind specifically to the DNA sequence 5'-TGTCTC-3' found in the auxin-responsive promoter elements (AuxREs). The chain is Auxin response factor 7 (ARF7) from Oryza sativa subsp. japonica (Rice).